The primary structure comprises 808 residues: Zinc finger protein 841 (808 aa).

A Glycyl lysine isopeptide (Lys-Gly) (interchain with G-Cter in SUMO2) cross-link involves residue K137. Residues 145–167 (YIGNECGKAFRVSSSLINHQMIH) form a C2H2-type 1; degenerate zinc finger. A C2H2-type 2; degenerate zinc finger spans residues 173–195 (YRCNESGKAFHRGSLLTVHQIVH). 13 C2H2-type zinc fingers span residues 201–223 (YQCD…RRSH), 229–251 (YICN…QRIH), 257–279 (YKCN…QTVH), 285–307 (YKCN…HIIH), 313–335 (YTCD…QIIH), 341–363 (YKCN…RRIH), 369–391 (YKCN…QRVH), 397–419 (YKCN…QRIH), 425–447 (YKCN…MRCH), 453–475 (LHCN…QRMH), 481–503 (YKCN…RRSH), 509–531 (FQCN…RKIH), and 537–559 (YKCN…LVIH). Residues K554 and K579 each participate in a glycyl lysine isopeptide (Lys-Gly) (interchain with G-Cter in SUMO2) cross-link. The segment at 565–587 (YHCNEFGEAFIQSSKLARYHRNP) adopts a C2H2-type 16; degenerate zinc-finger fold. 7 C2H2-type zinc fingers span residues 593 to 615 (HKCS…QRRH), 621 to 643 (YKCI…RRIH), 649 to 671 (YKCN…WSIH), 677 to 699 (YKCN…QMMH), 705 to 727 (YKCN…QRNH), 733 to 755 (YKCM…QRIH), and 761 to 783 (YKCN…QIKH). K791 is covalently cross-linked (Glycyl lysine isopeptide (Lys-Gly) (interchain with G-Cter in SUMO2)).

It belongs to the krueppel C2H2-type zinc-finger protein family.

It is found in the nucleus. Its function is as follows. May be involved in transcriptional regulation. This is Zinc finger protein 841 (ZNF841) from Homo sapiens (Human).